The chain runs to 263 residues: LIM and SH3 domain protein 1 (263 aa).

Met1 is subject to N-acetylmethionine. Residues 3-63 (PNCARCGKIV…NAHYPKQSFT (61 aa)) enclose the LIM zinc-binding domain. Lys42 carries the N6-acetyllysine modification. 2 Nebulin repeats span residues 64–95 (MVAD…KNKG) and 97–131 (GFSV…KSRM). Thr68 carries the post-translational modification Phosphothreonine. N6-methyllysine is present on Lys75. At Ser99 the chain carries Phosphoserine. Thr104 carries the post-translational modification Phosphothreonine. The residue at position 112 (Lys112) is an N6-succinyllysine. Residues Ser118 and Ser134 each carry the phosphoserine modification. Positions 122 to 207 (YHEEFEKSRM…QRSAPGGGGK (86 aa)) are disordered. Residues 148–162 (DSSSYRRPTEQQQPQ) show a composition bias toward polar residues. The SH3 domain maps to 204-263 (GGGKRYRAVYDYSAADEDEVSFQDGDTIVNVQQIDDGWMYGTVERTGDTGMLPANYVEAI).

Interacts with F-actin. Interacts with ANKRD54. Interacts with KBTBD10. Phosphorylated. Expressed in a wide range of tissues (but not the heart or skeletal muscle), the expression is specific for certain actin-rich cell types within these tissues. Expression is prominent in the cortical regions of ion-transporting duct cells in the pancreas, in the salivary parotid gland and in certain F-actin-rich cells in the distal tubule/collecting duct. In primary cultures of gastric fibroblasts, expression is mainly within the tips of lamellipodia and at the leading edges of membrane ruffles.

It is found in the cytoplasm. The protein resides in the cell cortex. It localises to the cytoskeleton. Its function is as follows. Plays an important role in the regulation of dynamic actin-based, cytoskeletal activities. Agonist-dependent changes in LASP1 phosphorylation may also serve to regulate actin-associated ion transport activities, not only in the parietal cell but also in certain other F-actin-rich secretory epithelial cell types. This is LIM and SH3 domain protein 1 from Rattus norvegicus (Rat).